We begin with the raw amino-acid sequence, 229 residues long: Translation initiation factor IF-3 (229 aa).

Disordered stretches follow at residues 1 to 21 (MAIQ…TNRR) and 184 to 229 (QAQR…AGPR). Over residues 192 to 203 (AAAQAAPAAAPQ) the composition is skewed to low complexity. Pro residues predominate over residues 204 to 221 (PGAPAAPPAAPAPAPAPE).

It belongs to the IF-3 family. As to quaternary structure, monomer.

The protein localises to the cytoplasm. IF-3 binds to the 30S ribosomal subunit and shifts the equilibrium between 70S ribosomes and their 50S and 30S subunits in favor of the free subunits, thus enhancing the availability of 30S subunits on which protein synthesis initiation begins. The sequence is that of Translation initiation factor IF-3 from Anaeromyxobacter sp. (strain Fw109-5).